A 137-amino-acid polypeptide reads, in one-letter code: Thionin-like protein 1 (137 aa).

The N-terminal stretch at 1–23 (MEDKRVAMLVVMMLVMGNMLIEA) is a signal peptide.

It belongs to the plant thionin (TC 1.C.44) family. In terms of processing, is disulfide-linked.

The protein localises to the secreted. Its function is as follows. May be involved in plant defense. The sequence is that of Thionin-like protein 1 from Arabidopsis thaliana (Mouse-ear cress).